Consider the following 265-residue polypeptide: TATA-box-binding protein (265 aa).

The tract at residues 1-40 is disordered; the sequence is MYNPSQAVPVSLHKNQDNQDGGQQRSHYPQISSQQSQSYL. A compositionally biased stretch (polar residues) spans 18-29; that stretch reads NQDGGQQRSHYP. Tandem repeats lie at residues 91-167 and 181-258.

It belongs to the TBP family. In terms of assembly, belongs to the TFIID complex together with the TBP-associated factors (TAFs). Binds DNA as monomer.

The protein localises to the nucleus. In terms of biological role, general transcription factor that functions at the core of the DNA-binding multiprotein factor TFIID. Binding of TFIID to the TATA box is the initial transcriptional step of the pre-initiation complex (PIC), playing a role in the activation of eukaryotic genes transcribed by RNA polymerase II. The polypeptide is TATA-box-binding protein (Strongylocentrotus purpuratus (Purple sea urchin)).